The following is a 206-amino-acid chain: Anti-sigma-W factor RsiW (206 aa).

Topologically, residues 1 to 87 (MSCPEHIVQL…ASINRWLKAH (87 aa)) are cytoplasmic. 3 residues coordinate Zn(2+): H30, C34, and C37. The chain crosses the membrane as a helical span at residues 88–108 (PFLVAAALFAILMGGSFFSSW). At 109–206 (KNDHDFSVSS…SVFGVKESKE (98 aa)) the chain is on the extracellular side.

It belongs to the zinc-associated anti-sigma factor (ZAS) superfamily. Anti-sigma-W factor family. The cofactor is Zn(2+). Is processed by three successive proteolytic events. First, the extracellular region of RsiW is cleaved by PrsW (Site-1 cleavage) in response to cell envelope stresses. Next, it undergoes cleavage at an intramembrane site (Site-2 cleavage) mediated by RasP. This cleavage uncovers a cryptic proteolytic tag with conserved alanine residues in the transmembrane segment, that is recognized mainly by the ClpXP protease, which completely degrades the protein in the cytoplasm and leads to the induction of the sigma-W-controlled genes.

Its subcellular location is the membrane. In terms of biological role, is the anti-sigma factor for SigW. The presence of RsiW leads to the inactivation of SigW, and its proteolytic destruction to sigma-W activation. The protein is Anti-sigma-W factor RsiW (rsiW) of Bacillus licheniformis (strain ATCC 14580 / DSM 13 / JCM 2505 / CCUG 7422 / NBRC 12200 / NCIMB 9375 / NCTC 10341 / NRRL NRS-1264 / Gibson 46).